The chain runs to 471 residues: Cysteine--tRNA ligase (471 aa).

Position 29 (C29) interacts with Zn(2+). The 'HIGH' region motif lies at 31 to 41; the sequence is PTVYNYIHIGN. Zn(2+) is bound by residues C209, H234, and E238. The 'KMSKS' region signature appears at 266–270; that stretch reads KMSKS. An ATP-binding site is contributed by K269.

The protein belongs to the class-I aminoacyl-tRNA synthetase family. In terms of assembly, monomer. Requires Zn(2+) as cofactor.

The protein resides in the cytoplasm. It catalyses the reaction tRNA(Cys) + L-cysteine + ATP = L-cysteinyl-tRNA(Cys) + AMP + diphosphate. The chain is Cysteine--tRNA ligase from Listeria welshimeri serovar 6b (strain ATCC 35897 / DSM 20650 / CCUG 15529 / CIP 8149 / NCTC 11857 / SLCC 5334 / V8).